Reading from the N-terminus, the 334-residue chain is Nucleoid-associated protein plu2870 (334 aa).

Belongs to the YejK family.

It localises to the cytoplasm. The protein localises to the nucleoid. This chain is Nucleoid-associated protein plu2870, found in Photorhabdus laumondii subsp. laumondii (strain DSM 15139 / CIP 105565 / TT01) (Photorhabdus luminescens subsp. laumondii).